Here is a 561-residue protein sequence, read N- to C-terminus: Asparagine synthetase [glutamine-hydrolyzing] (561 aa).

Catalysis depends on Cys-2, which acts as the For GATase activity. In terms of domain architecture, Glutamine amidotransferase type-2 spans 2–191 (CGIWALFGSD…PGHYEVLDLK (190 aa)). Residues 49 to 53 (RLAVV), 75 to 77 (NGE), and Asp-97 contribute to the L-glutamine site. The region spanning 213–536 (HAIYDSVEKL…PGRADWLTHY (324 aa)) is the Asparagine synthetase domain. ATP is bound by residues Leu-256, Ile-288, and 363 to 364 (SG). Position 385 is an N6-acetyllysine (Lys-385). The residue at position 545 (Thr-545) is a Phosphothreonine. A Phosphoserine modification is found at Ser-557.

It catalyses the reaction L-aspartate + L-glutamine + ATP + H2O = L-asparagine + L-glutamate + AMP + diphosphate + H(+). Its pathway is amino-acid biosynthesis; L-asparagine biosynthesis; L-asparagine from L-aspartate (L-Gln route): step 1/1. The protein is Asparagine synthetase [glutamine-hydrolyzing] (Asns) of Rattus norvegicus (Rat).